We begin with the raw amino-acid sequence, 119 residues long: Holo-[acyl-carrier-protein] synthase (119 aa).

Asp-7 and Glu-56 together coordinate Mg(2+).

It belongs to the P-Pant transferase superfamily. AcpS family. It depends on Mg(2+) as a cofactor.

It localises to the cytoplasm. It carries out the reaction apo-[ACP] + CoA = holo-[ACP] + adenosine 3',5'-bisphosphate + H(+). Its function is as follows. Transfers the 4'-phosphopantetheine moiety from coenzyme A to a Ser of acyl-carrier-protein. This Chlamydia trachomatis serovar D (strain ATCC VR-885 / DSM 19411 / UW-3/Cx) protein is Holo-[acyl-carrier-protein] synthase.